Here is a 292-residue protein sequence, read N- to C-terminus: 4-hydroxy-tetrahydrodipicolinate synthase (292 aa).

T45 serves as a coordination point for pyruvate. Residue Y133 is the Proton donor/acceptor of the active site. The active-site Schiff-base intermediate with substrate is the K161. Pyruvate is bound at residue I203.

Belongs to the DapA family. As to quaternary structure, homotetramer; dimer of dimers.

It localises to the cytoplasm. The catalysed reaction is L-aspartate 4-semialdehyde + pyruvate = (2S,4S)-4-hydroxy-2,3,4,5-tetrahydrodipicolinate + H2O + H(+). It functions in the pathway amino-acid biosynthesis; L-lysine biosynthesis via DAP pathway; (S)-tetrahydrodipicolinate from L-aspartate: step 3/4. Its function is as follows. Catalyzes the condensation of (S)-aspartate-beta-semialdehyde [(S)-ASA] and pyruvate to 4-hydroxy-tetrahydrodipicolinate (HTPA). This chain is 4-hydroxy-tetrahydrodipicolinate synthase, found in Shigella boydii serotype 18 (strain CDC 3083-94 / BS512).